A 179-amino-acid chain; its full sequence is Segregation and condensation protein B (179 aa).

It belongs to the ScpB family. Homodimer. Homodimerization may be required to stabilize the binding of ScpA to the Smc head domains. Component of a cohesin-like complex composed of ScpA, ScpB and the Smc homodimer, in which ScpA and ScpB bind to the head domain of Smc. The presence of the three proteins is required for the association of the complex with DNA.

It is found in the cytoplasm. Participates in chromosomal partition during cell division. May act via the formation of a condensin-like complex containing Smc and ScpA that pull DNA away from mid-cell into both cell halves. The chain is Segregation and condensation protein B from Streptococcus equi subsp. equi (strain 4047).